Reading from the N-terminus, the 1025-residue chain is Multidrug resistance protein MdtC (1025 aa).

12 helical membrane-spanning segments follow: residues 15-35 (ILISLAITLCGILGFRLLPVA), 333-353 (EVEQTLVISVALVILVVFLFL), 360-380 (LIPAVAVPVSLIGTFAAMYLC), 387-407 (LSLMALTIATGFVVDDAIVVL), 431-451 (VGFTVLSMSLSLVAVFLPLLL), 469-489 (VAIGISLAVSLTLTPMMCGWL), 528-548 (LTGLVVLGTIALSVWLYISIP), 851-871 (AQVILILAAIATVYIVLGVLY), 875-895 (VHPLTILSTLPSAGVGALLAL), 897-917 (IFDAPFSLIALIGIMLLIGIV), 953-973 (PIMMTTLAALFGALPLVLSGG), and 984-1004 (ITIVGGLVMSQLLTLYTTPVV).

This sequence belongs to the resistance-nodulation-cell division (RND) (TC 2.A.6) family. MdtC subfamily. As to quaternary structure, part of a tripartite efflux system composed of MdtA, MdtB and MdtC. MdtC forms a heteromultimer with MdtB.

Its subcellular location is the cell inner membrane. This Klebsiella pneumoniae subsp. pneumoniae (strain ATCC 700721 / MGH 78578) protein is Multidrug resistance protein MdtC.